Here is a 242-residue protein sequence, read N- to C-terminus: 1-(5-phosphoribosyl)-5-[(5-phosphoribosylamino)methylideneamino] imidazole-4-carboxamide isomerase (242 aa).

Catalysis depends on aspartate 8, which acts as the Proton acceptor. Aspartate 129 acts as the Proton donor in catalysis.

It belongs to the HisA/HisF family.

Its subcellular location is the cytoplasm. It carries out the reaction 1-(5-phospho-beta-D-ribosyl)-5-[(5-phospho-beta-D-ribosylamino)methylideneamino]imidazole-4-carboxamide = 5-[(5-phospho-1-deoxy-D-ribulos-1-ylimino)methylamino]-1-(5-phospho-beta-D-ribosyl)imidazole-4-carboxamide. It functions in the pathway amino-acid biosynthesis; L-histidine biosynthesis; L-histidine from 5-phospho-alpha-D-ribose 1-diphosphate: step 4/9. The chain is 1-(5-phosphoribosyl)-5-[(5-phosphoribosylamino)methylideneamino] imidazole-4-carboxamide isomerase from Dictyoglomus thermophilum (strain ATCC 35947 / DSM 3960 / H-6-12).